The chain runs to 130 residues: Protein ApaG (130 aa).

The 125-residue stretch at 3–127 (RALTRDIEVT…FSLDSPGLMR (125 aa)) folds into the ApaG domain.

In Agrobacterium fabrum (strain C58 / ATCC 33970) (Agrobacterium tumefaciens (strain C58)), this protein is Protein ApaG.